The primary structure comprises 409 residues: Arginine deiminase (409 aa).

The active-site Amidino-cysteine intermediate is the C399.

Belongs to the arginine deiminase family.

The protein localises to the cytoplasm. The catalysed reaction is L-arginine + H2O = L-citrulline + NH4(+). It participates in amino-acid degradation; L-arginine degradation via ADI pathway; carbamoyl phosphate from L-arginine: step 1/2. This is Arginine deiminase from Borrelia duttonii (strain Ly).